A 248-amino-acid polypeptide reads, in one-letter code: Anamorsin homolog (248 aa).

Residues 4 to 129 (FKGLQKSLYI…ETGSSARLSF (126 aa)) are N-terminal SAM-like domain. Positions 130–161 (AKKNASAVNVWKISGDDEELIDEEELLDEEDK) are linker. Residues C172, C181, C184, and C186 each coordinate [2Fe-2S] cluster. The fe-S binding site A stretch occupies residues 172-186 (CSTTGKRKACKNCSC). [4Fe-4S] cluster-binding residues include C209, C212, C220, and C223. Short sequence motifs (cx2C motif) lie at residues 209–212 (CGNC) and 220–223 (CSTC). The tract at residues 209 to 223 (CGNCYLGDAFRCSTC) is fe-S binding site B.

The protein belongs to the anamorsin family. As to quaternary structure, monomer. [2Fe-2S] cluster serves as cofactor. It depends on [4Fe-4S] cluster as a cofactor.

It is found in the cytoplasm. The protein resides in the mitochondrion intermembrane space. Component of the cytosolic iron-sulfur (Fe-S) protein assembly (CIA) machinery. Required for the maturation of extramitochondrial Fe-S proteins. Part of an electron transfer chain functioning in an early step of cytosolic Fe-S biogenesis, facilitating the de novo assembly of a [4Fe-4S] cluster on the cytosolic Fe-S scaffold complex. Electrons are transferred from NADPH via a FAD- and FMN-containing diflavin oxidoreductase. Together with the diflavin oxidoreductase, also required for the assembly of the diferric tyrosyl radical cofactor of ribonucleotide reductase (RNR), probably by providing electrons for reduction during radical cofactor maturation in the catalytic small subunit. In Drosophila melanogaster (Fruit fly), this protein is Anamorsin homolog.